We begin with the raw amino-acid sequence, 316 residues long: Acetyl-coenzyme A carboxylase carboxyl transferase subunit beta (316 aa).

The CoA carboxyltransferase N-terminal domain maps to 39-308 (LWHKCSKCGV…TPPMVLWETM (270 aa)). The Zn(2+) site is built by Cys-43, Cys-46, Cys-62, and Cys-65. The segment at 43–65 (CSKCGVLTYTKDLRANQMVCVEC) adopts a C4-type zinc-finger fold.

It belongs to the AccD/PCCB family. In terms of assembly, acetyl-CoA carboxylase is a heterohexamer composed of biotin carboxyl carrier protein (AccB), biotin carboxylase (AccC) and two subunits each of ACCase subunit alpha (AccA) and ACCase subunit beta (AccD). It depends on Zn(2+) as a cofactor.

It is found in the cytoplasm. The catalysed reaction is N(6)-carboxybiotinyl-L-lysyl-[protein] + acetyl-CoA = N(6)-biotinyl-L-lysyl-[protein] + malonyl-CoA. It functions in the pathway lipid metabolism; malonyl-CoA biosynthesis; malonyl-CoA from acetyl-CoA: step 1/1. Functionally, component of the acetyl coenzyme A carboxylase (ACC) complex. Biotin carboxylase (BC) catalyzes the carboxylation of biotin on its carrier protein (BCCP) and then the CO(2) group is transferred by the transcarboxylase to acetyl-CoA to form malonyl-CoA. The sequence is that of Acetyl-coenzyme A carboxylase carboxyl transferase subunit beta from Trichormus variabilis (strain ATCC 29413 / PCC 7937) (Anabaena variabilis).